A 165-amino-acid chain; its full sequence is HTH-type transcriptional regulator IscR (165 aa).

The 130-residue stretch at 2–131 folds into the HTH rrf2-type domain; that stretch reads RLTSKGRYAV…NNITLAELVS (130 aa). The H-T-H motif DNA-binding region spans 28 to 51; it reads LAEISERQGISLSYLEQLFSRLRK. The [2Fe-2S] cluster site is built by C92, C98, and C104. A disordered region spans residues 144 to 165; sequence NDTRRPLTNGRPQETINVNLHA. A compositionally biased stretch (polar residues) spans 153-165; it reads GRPQETINVNLHA.

The cofactor is [2Fe-2S] cluster.

In terms of biological role, regulates the transcription of several operons and genes involved in the biogenesis of Fe-S clusters and Fe-S-containing proteins. This Sodalis glossinidius (strain morsitans) protein is HTH-type transcriptional regulator IscR.